Here is an 88-residue protein sequence, read N- to C-terminus: Cell division topological specificity factor (88 aa).

The protein belongs to the MinE family.

Functionally, prevents the cell division inhibition by proteins MinC and MinD at internal division sites while permitting inhibition at polar sites. This ensures cell division at the proper site by restricting the formation of a division septum at the midpoint of the long axis of the cell. This is Cell division topological specificity factor from Acidovorax ebreus (strain TPSY) (Diaphorobacter sp. (strain TPSY)).